Reading from the N-terminus, the 149-residue chain is 3-dehydroquinate dehydratase (149 aa).

Tyr-23 (proton acceptor) is an active-site residue. Substrate-binding residues include Asn-75, His-81, and Asp-88. The active-site Proton donor is the His-101. Residues 102–103 (MS) and Arg-112 each bind substrate.

This sequence belongs to the type-II 3-dehydroquinase family. Homododecamer.

The catalysed reaction is 3-dehydroquinate = 3-dehydroshikimate + H2O. Its pathway is metabolic intermediate biosynthesis; chorismate biosynthesis; chorismate from D-erythrose 4-phosphate and phosphoenolpyruvate: step 3/7. In terms of biological role, catalyzes a trans-dehydration via an enolate intermediate. In Pelobacter propionicus (strain DSM 2379 / NBRC 103807 / OttBd1), this protein is 3-dehydroquinate dehydratase.